A 150-amino-acid chain; its full sequence is Large ribosomal subunit protein bL9 (150 aa).

The protein belongs to the bacterial ribosomal protein bL9 family.

In terms of biological role, binds to the 23S rRNA. In Shewanella sp. (strain MR-4), this protein is Large ribosomal subunit protein bL9.